Consider the following 310-residue polypeptide: Antiviral protein II/III (310 aa).

A signal peptide spans 1–25; that stretch reads MKMKVLEVVGLAISIWLMLTPPASS. 2 disulfide bridges follow: cysteine 57-cysteine 284 and cysteine 106-cysteine 123. Residue tyrosine 94 is part of the active site. Active-site residues include tyrosine 142, glutamate 197, and arginine 200.

Belongs to the ribosome-inactivating protein family. Type 1 RIP subfamily. PAP-II is expressed in early summer leaves (at protein level). PAP-III is expressed in late summer leaves (at protein level).

It carries out the reaction Endohydrolysis of the N-glycosidic bond at one specific adenosine on the 28S rRNA.. Its function is as follows. Possesses antiviral potency. Inhibits viral infection of plants (tobacco mosaic virus). Inhibits protein synthesis in both prokaryotes and eukaryotes. The polypeptide is Antiviral protein II/III (PAP2) (Phytolacca americana (American pokeweed)).